Consider the following 103-residue polypeptide: N(4)-acetylcytidine amidohydrolase (103 aa).

Residues 6–101 form the ASCH domain; that stretch reads ITFSQRFQDD…QTQFYVIEFK (96 aa). The Proton acceptor role is filled by K21. The active-site Nucleophile is T24. E74 serves as the catalytic Proton donor.

It belongs to the N(4)-acetylcytidine amidohydrolase family.

The enzyme catalyses N(4)-acetylcytidine + H2O = cytidine + acetate + H(+). It carries out the reaction N(4)-acetyl-2'-deoxycytidine + H2O = 2'-deoxycytidine + acetate + H(+). It catalyses the reaction N(4)-acetylcytosine + H2O = cytosine + acetate + H(+). In terms of biological role, catalyzes the hydrolysis of N(4)-acetylcytidine (ac4C). This Shigella boydii serotype 4 (strain Sb227) protein is N(4)-acetylcytidine amidohydrolase (yqfB).